Consider the following 429-residue polypeptide: Glutamate-1-semialdehyde 2,1-aminomutase 2 (429 aa).

Lysine 267 is modified (N6-(pyridoxal phosphate)lysine).

The protein belongs to the class-III pyridoxal-phosphate-dependent aminotransferase family. HemL subfamily. In terms of assembly, homodimer. It depends on pyridoxal 5'-phosphate as a cofactor.

Its subcellular location is the cytoplasm. The enzyme catalyses (S)-4-amino-5-oxopentanoate = 5-aminolevulinate. It participates in porphyrin-containing compound metabolism; protoporphyrin-IX biosynthesis; 5-aminolevulinate from L-glutamyl-tRNA(Glu): step 2/2. This is Glutamate-1-semialdehyde 2,1-aminomutase 2 (gsaB) from Bacillus subtilis (strain 168).